The sequence spans 261 residues: MVKLNQLRKDNPLIICITNDVVKNFTANGLLALGASPAMATERQEMDEFLAHAGALLINIGSIEEGDKENMLQAAAFANKHHVPIVLDPVACGASKFRKDFCLRLLNEHHISIIRGNASELAALTDDATMKGTDADQSLSTESVARRAYDKFKTAIIATGAVDAICQDEQIMLVENGTPMLTKVTGGGCLLGAVVASFIYNETKPSLALLTEAIATYTIAAERAAHSANGTLPGHFAVNLIDQLYLIQQDDIAKESRVKEV.

Met39 is a substrate binding site. The ATP site is built by Arg115 and Thr159. A substrate-binding site is contributed by Gly186.

The protein belongs to the Thz kinase family. Mg(2+) is required as a cofactor.

The enzyme catalyses 5-(2-hydroxyethyl)-4-methylthiazole + ATP = 4-methyl-5-(2-phosphooxyethyl)-thiazole + ADP + H(+). Its pathway is cofactor biosynthesis; thiamine diphosphate biosynthesis; 4-methyl-5-(2-phosphoethyl)-thiazole from 5-(2-hydroxyethyl)-4-methylthiazole: step 1/1. Catalyzes the phosphorylation of the hydroxyl group of 4-methyl-5-beta-hydroxyethylthiazole (THZ). The polypeptide is Hydroxyethylthiazole kinase (Macrococcus caseolyticus (strain JCSC5402) (Macrococcoides caseolyticum)).